The chain runs to 312 residues: Ribonuclease HIII (312 aa).

Positions 95 to 311 (FNCIGSDEAG…REKAQKILKP (217 aa)) constitute an RNase H type-2 domain. A divalent metal cation contacts are provided by Asp-101, Glu-102, and Asp-206.

This sequence belongs to the RNase HII family. RnhC subfamily. It depends on Mn(2+) as a cofactor. The cofactor is Mg(2+).

The protein resides in the cytoplasm. It catalyses the reaction Endonucleolytic cleavage to 5'-phosphomonoester.. Its function is as follows. Endonuclease that specifically degrades the RNA of RNA-DNA hybrids. This is Ribonuclease HIII from Staphylococcus aureus (strain MSSA476).